We begin with the raw amino-acid sequence, 147 residues long: Myoglobin (147 aa).

The 140-residue stretch at 2-141 (ADFDAVLKCW…VIADLEANYK (140 aa)) folds into the Globin domain. His-60 is a binding site for nitrite. His-60 serves as a coordination point for O2. His-89 contacts heme b.

Belongs to the globin family. In terms of assembly, monomeric.

The protein resides in the cytoplasm. It is found in the sarcoplasm. It catalyses the reaction Fe(III)-heme b-[protein] + nitric oxide + H2O = Fe(II)-heme b-[protein] + nitrite + 2 H(+). The catalysed reaction is H2O2 + AH2 = A + 2 H2O. Monomeric heme protein which primary function is to store oxygen and facilitate its diffusion within muscle tissues. Reversibly binds oxygen through a pentacoordinated heme iron and enables its timely and efficient release as needed during periods of heightened demand. Depending on the oxidative conditions of tissues and cells, and in addition to its ability to bind oxygen, it also has a nitrite reductase activity whereby it regulates the production of bioactive nitric oxide. Under stress conditions, like hypoxia and anoxia, it also protects cells against reactive oxygen species thanks to its pseudoperoxidase activity. This Auxis rochei (Bullet tuna) protein is Myoglobin (mb).